We begin with the raw amino-acid sequence, 309 residues long: Olfactory receptor 7A17 (309 aa).

The Extracellular segment spans residues 1-25; that stretch reads MEPENDTGISEFVLLGLSEEPELQP. Asparagine 5 carries N-linked (GlcNAc...) asparagine glycosylation. A helical transmembrane segment spans residues 26–46; sequence FLFGLFLSMYLVTVLGNLLII. Residues 47 to 54 are Cytoplasmic-facing; it reads LATISDSH. A helical transmembrane segment spans residues 55–75; that stretch reads LHTPMYFFLSNLSFADICFIS. The Extracellular segment spans residues 76–99; sequence TTIPKMLINIQTQSRVITYAGCIT. Cysteine 97 and cysteine 189 form a disulfide bridge. Residues 100–120 traverse the membrane as a helical segment; sequence QMCFFVLFGGLDSLLLAVMAY. Residues 121–139 are Cytoplasmic-facing; it reads DRFVAICHPLHYTVIMNPR. Residues 140–160 form a helical membrane-spanning segment; sequence LCGLLVLASWMIAALNSLSQS. Topologically, residues 161 to 197 are extracellular; that stretch reads LMVLWLSFCTDLEIPHFFCELNQVIHLACSDTFLNDM. A helical transmembrane segment spans residues 198 to 217; that stretch reads GMYFAAGLLAGGPLVGILCS. Residues 218–237 lie on the Cytoplasmic side of the membrane; that stretch reads YSKIVSSIRAISSAQGKYKA. A helical membrane pass occupies residues 238–258; it reads FSTCASHLSVVSLFCCTGLGV. Residues 259-271 lie on the Extracellular side of the membrane; sequence YLTSAATHNSHTS. Residues 272–292 traverse the membrane as a helical segment; sequence ATASVMYTVATPMLNPFIYSL. The Cytoplasmic segment spans residues 293 to 309; that stretch reads RNKDIKRALKMSFRGKQ.

This sequence belongs to the G-protein coupled receptor 1 family.

The protein resides in the cell membrane. In terms of biological role, odorant receptor. The polypeptide is Olfactory receptor 7A17 (OR7A17) (Homo sapiens (Human)).